The following is an 80-amino-acid chain: MNTQELCKIFVAREYPLVVVPFIYFVLFLHQKYHTTLNYVWYPTCSKRIWVREKGRKCSFFFFSKVPRSDGFANNRCQRK.

A helical membrane pass occupies residues 10 to 29; the sequence is FVAREYPLVVVPFIYFVLFL.

The protein resides in the membrane. This is an uncharacterized protein from Saccharomyces cerevisiae (strain ATCC 204508 / S288c) (Baker's yeast).